The chain runs to 501 residues: Sodium-coupled neutral amino acid symporter 2 (501 aa).

The interval 1–26 (MSSAEMGKFDISPDEDSSSYSSNSND) is disordered. The Cytoplasmic segment spans residues 1 to 77 (MSSAEMGKFD…HPGTTSFGMS (77 aa)). Positions 1–97 (MSSAEMGKFD…SGILGLSYAM (97 aa)) are regulates protein turnover upon amino acid deprivation. Residues 78–97 (VFNLSNAIVGSGILGLSYAM) traverse the membrane as a helical segment. Asn-83 is a Na(+) binding site. Topologically, residues 98–103 (ANTGIA) are extracellular. The helical transmembrane segment at 104 to 124 (LFVILLLVVSILSLYSVHLLL) threads the bilayer. Residues 125-159 (KTANEGGSLLYEQLGMKAFGMPGKLAASGSITMQN) are Cytoplasmic-facing. Residues 160–178 (IGAMSSYLFIVKYELPLVI) form a helical membrane-spanning segment. Residues 179–189 (KTFMNIEENAG) lie on the Extracellular side of the membrane. Residues 190 to 210 (HWYLNGDYLVLLVSVILILPL) traverse the membrane as a helical segment. Residues 211-218 (SLLKNLGY) lie on the Cytoplasmic side of the membrane. Residues 219 to 239 (LGYTSGFSLLCMVFFLIVVIW) traverse the membrane as a helical segment. Residues 240–287 (KMFQIPCPMESDIINATLINATLAPFADENITISDACKPEYFIFNSQT) are Extracellular-facing. Cys-246 and Cys-276 are joined by a disulfide. N-linked (GlcNAc...) asparagine glycosylation is found at Asn-254 and Asn-259. Residues 288–308 (VYAVPILTFSFVCHPAILPIY) form a helical membrane-spanning segment. Residues 309–324 (EELKSRSRKRMMNVSY) lie on the Cytoplasmic side of the membrane. Residues 325–345 (VSFFAMFLMYLLAALFGYLTF) traverse the membrane as a helical segment. At 346-366 (YGRVESELLHTYSAFLGADIL) the chain is on the extracellular side. Residues 367–387 (LLIVRLAVLMAVTLTVPVVIF) form a helical membrane-spanning segment. Thr-381 is a binding site for Na(+). The Cytoplasmic segment spans residues 388–408 (PIRSSVTQLLWAGKEFSWWRH). The helical transmembrane segment at 409–429 (CSITVVLLAFTNVLVIFVPTI) threads the bilayer. The Extracellular segment spans residues 430-431 (RD). Residues 432–452 (IFGFIGASAAAMLIFILPSAF) form a helical membrane-spanning segment. Residues 453–467 (YIKLVKKEPMKSVQK) are Cytoplasmic-facing. The chain crosses the membrane as a helical span at residues 468-490 (IGAALFFLSGILVMTGCMTLIIL). The Extracellular segment spans residues 491–501 (DWIHTDASDGH).

It belongs to the amino acid/polyamine transporter 2 family.

Its subcellular location is the cell membrane. The catalysed reaction is L-alanine(in) + Na(+)(in) = L-alanine(out) + Na(+)(out). It catalyses the reaction glycine(in) + Na(+)(in) = glycine(out) + Na(+)(out). The enzyme catalyses L-serine(in) + Na(+)(in) = L-serine(out) + Na(+)(out). It carries out the reaction L-proline(in) + Na(+)(in) = L-proline(out) + Na(+)(out). The catalysed reaction is L-methionine(in) + Na(+)(in) = L-methionine(out) + Na(+)(out). It catalyses the reaction L-histidine(in) + Na(+)(in) = L-histidine(out) + Na(+)(out). The enzyme catalyses L-asparagine(in) + Na(+)(in) = L-asparagine(out) + Na(+)(out). It carries out the reaction L-glutamine(in) + Na(+)(in) = L-glutamine(out) + Na(+)(out). The catalysed reaction is L-threonine(in) + Na(+)(in) = L-threonine(out) + Na(+)(out). It catalyses the reaction L-leucine(in) + Na(+)(in) = L-leucine(out) + Na(+)(out). The enzyme catalyses L-phenylalanine(in) + Na(+)(in) = L-phenylalanine(out) + Na(+)(out). With respect to regulation, inhibited by N-methyl-D-glucamine. Inhibited by choline. Allosteric regulation of sodium ions binding by pH. Functionally, symporter that cotransports neutral amino acids and sodium ions from the extracellular to the intracellular side of the cell membrane. The transport is pH-sensitive, Li(+)-intolerant, electrogenic, driven by the Na(+) electrochemical gradient and cotransports of neutral amino acids and sodium ions with a stoichiometry of 1:1. This is Sodium-coupled neutral amino acid symporter 2 from Gallus gallus (Chicken).